The primary structure comprises 310 residues: uncharacterized protein (310 aa).

Disordered stretches follow at residues methionine 1–methionine 53, proline 78–asparagine 127, and glutamine 153–leucine 217. The segment covering glycine 11–aspartate 25 has biased composition (acidic residues). Composition is skewed to polar residues over residues serine 37–leucine 49 and proline 78–proline 88. Low complexity-rich tracts occupy residues glutamine 94 to threonine 126, proline 164 to threonine 184, and tyrosine 192 to threonine 208. Residues aspartate 268–glutamine 299 adopt a coiled-coil conformation.

This is an uncharacterized protein from Dictyostelium discoideum (Social amoeba).